A 234-amino-acid polypeptide reads, in one-letter code: uncharacterized protein (234 aa).

The next 4 membrane-spanning stretches (helical) occupy residues 22–42, 59–79, 154–174, and 186–206; these read TFLNTLIYCILLVIYEYIPLI, INWALSFGILPCAFAIFAYLI, FWIFFEFSIIALISFLIIFFC, and LLSLFFFVILSFSVSGIIFAL.

It localises to the cell membrane. This is an uncharacterized protein from Escherichia coli (strain K12).